Reading from the N-terminus, the 184-residue chain is Large ribosomal subunit protein uL15 (184 aa).

The disordered stretch occupies residues 1 to 45 (MDLSSLRPAKGAVKNKKRVGRGQGSGNGTTAGKGNNGQQSRSGYK). The segment covering 21–35 (RGQGSGNGTTAGKGN) has biased composition (gly residues).

It belongs to the universal ribosomal protein uL15 family. As to quaternary structure, part of the 50S ribosomal subunit.

Binds to the 23S rRNA. The chain is Large ribosomal subunit protein uL15 from Pelodictyon phaeoclathratiforme (strain DSM 5477 / BU-1).